The chain runs to 254 residues: Imidazole glycerol phosphate synthase subunit HisF (254 aa).

Residues aspartate 11 and aspartate 130 contribute to the active site.

Belongs to the HisA/HisF family. Heterodimer of HisH and HisF.

It is found in the cytoplasm. It catalyses the reaction 5-[(5-phospho-1-deoxy-D-ribulos-1-ylimino)methylamino]-1-(5-phospho-beta-D-ribosyl)imidazole-4-carboxamide + L-glutamine = D-erythro-1-(imidazol-4-yl)glycerol 3-phosphate + 5-amino-1-(5-phospho-beta-D-ribosyl)imidazole-4-carboxamide + L-glutamate + H(+). It functions in the pathway amino-acid biosynthesis; L-histidine biosynthesis; L-histidine from 5-phospho-alpha-D-ribose 1-diphosphate: step 5/9. Its function is as follows. IGPS catalyzes the conversion of PRFAR and glutamine to IGP, AICAR and glutamate. The HisF subunit catalyzes the cyclization activity that produces IGP and AICAR from PRFAR using the ammonia provided by the HisH subunit. The chain is Imidazole glycerol phosphate synthase subunit HisF from Trichlorobacter lovleyi (strain ATCC BAA-1151 / DSM 17278 / SZ) (Geobacter lovleyi).